Here is a 361-residue protein sequence, read N- to C-terminus: Microtubule-associated protein Jupiter (361 aa).

Residues 1–15 (MISNYDITDSKSSSK) show a composition bias toward polar residues. Disordered regions lie at residues 1 to 38 (MISNYDITDSKSSSKVLRPPGGGSSDIFGSDMPQTPRN) and 70 to 99 (IGDNPRRGQKPVDSHSRLFGEPMRPITPGK). Phosphoserine is present on Ser-24. Thr-35 carries the post-translational modification Phosphothreonine. The segment covering 73–87 (NPRRGQKPVDSHSRL) has biased composition (basic and acidic residues). Thr-96 carries the phosphothreonine modification. Ser-105 carries the post-translational modification Phosphoserine. Low complexity-rich tracts occupy residues 125–134 (GSSTANTTNG) and 141–154 (SGSVSSASSSVSSS). Disordered regions lie at residues 125 to 165 (GSST…SGSR) and 328 to 361 (GSTNSGSVGNGDNGGNSVVNKNRVPPGGYSSGLW). Ser-143 and Ser-154 each carry phosphoserine. The segment covering 155–165 (TENLKMNSGSR) has biased composition (polar residues).

The protein belongs to the MAP Jupiter family.

It is found in the nucleus. The protein localises to the cytoplasm. The protein resides in the cytoskeleton. Its subcellular location is the spindle. Binds to all microtubule populations. The chain is Microtubule-associated protein Jupiter from Drosophila persimilis (Fruit fly).